Here is a 405-residue protein sequence, read N- to C-terminus: L-rhamnonate dehydratase (405 aa).

Residues H33 and R59 each coordinate substrate. Mg(2+) contacts are provided by D226, E252, and E280. The active-site Proton acceptor is the H329. E349 contributes to the substrate binding site.

It belongs to the mandelate racemase/muconate lactonizing enzyme family. RhamD subfamily. Homooctamer; tetramer of dimers. The cofactor is Mg(2+).

The catalysed reaction is L-rhamnonate = 2-dehydro-3-deoxy-L-rhamnonate + H2O. In terms of biological role, catalyzes the dehydration of L-rhamnonate to 2-keto-3-deoxy-L-rhamnonate (KDR). The protein is L-rhamnonate dehydratase of Escherichia coli (strain SMS-3-5 / SECEC).